Consider the following 188-residue polypeptide: Small ribosomal subunit protein uS12m (188 aa).

The N-terminal 63 residues, 1-63, are a transit peptide targeting the mitochondrion; that stretch reads MSGGRWISNL…AAFRLPQSSG (63 aa).

The protein belongs to the universal ribosomal protein uS12 family.

The protein resides in the mitochondrion. In terms of biological role, protein S12 is involved in the translation initiation step. The sequence is that of Small ribosomal subunit protein uS12m (RPS12) from Oenothera elata subsp. hookeri (Hooker's evening primrose).